A 53-amino-acid chain; its full sequence is Rubredoxin (53 aa).

Residues 1-53 (MQKFECTLCGYIYDPALVGPDTPDQDGAFEDVSENWVCPLCGAGKEDFEVYED) form the Rubredoxin-like domain. The Fe cation site is built by Cys6, Cys9, Cys38, and Cys41.

This sequence belongs to the rubredoxin family. The cofactor is Fe(3+).

Rubredoxin is a small nonheme, iron protein lacking acid-labile sulfide. Its single Fe, chelated to 4 Cys, functions as an electron acceptor and may also stabilize the conformation of the molecule. The chain is Rubredoxin from Peptoniphilus asaccharolyticus (Peptostreptococcus asaccharolyticus).